The following is a 415-amino-acid chain: Phosphoglycerate kinase (415 aa).

Substrate is bound by residues 24–26 (DLN), R39, 62–65 (HLGR), R121, and R161. ATP contacts are provided by residues K211, G307, E338, and 367 to 370 (GGDS).

This sequence belongs to the phosphoglycerate kinase family. Monomer.

Its subcellular location is the cytoplasm. It carries out the reaction (2R)-3-phosphoglycerate + ATP = (2R)-3-phospho-glyceroyl phosphate + ADP. Its pathway is carbohydrate degradation; glycolysis; pyruvate from D-glyceraldehyde 3-phosphate: step 2/5. This Micrococcus luteus (strain ATCC 4698 / DSM 20030 / JCM 1464 / CCM 169 / CCUG 5858 / IAM 1056 / NBRC 3333 / NCIMB 9278 / NCTC 2665 / VKM Ac-2230) (Micrococcus lysodeikticus) protein is Phosphoglycerate kinase.